The chain runs to 151 residues: Large ribosomal subunit protein bL9 (151 aa).

It belongs to the bacterial ribosomal protein bL9 family.

Its function is as follows. Binds to the 23S rRNA. The chain is Large ribosomal subunit protein bL9 from Francisella tularensis subsp. holarctica (strain LVS).